Here is a 142-residue protein sequence, read N- to C-terminus: Small ribosomal subunit protein uS12 (142 aa).

Residues 1–30 (MGKTRGMGAARKLKNHRRRQRWADKSYKKS) are disordered. Residues 11-20 (RKLKNHRRRQ) are compositionally biased toward basic residues. Positions 21–30 (RWADKSYKKS) are enriched in basic and acidic residues. The residue at position 61 (Pro61) is a Hydroxyproline.

This sequence belongs to the universal ribosomal protein uS12 family.

The sequence is that of Small ribosomal subunit protein uS12 (RPS23) from Fragaria ananassa (Strawberry).